A 240-amino-acid polypeptide reads, in one-letter code: Insulin-like growth factor-binding protein 3 receptor (240 aa).

A signal peptide spans 1–38 (MGNCQAGHNLHLCLAHHPPLVCATLILLLLGLSGLGLG). Topologically, residues 39 to 204 (SFLLTHRTGL…SEELALCGSR (166 aa)) are extracellular. N-linked (GlcNAc...) asparagine glycosylation is found at Asn-73, Asn-101, and Asn-167. The helical transmembrane segment at 205–225 (LLVLGSFLLLFCGLLCCVTAM) threads the bilayer. Residues 226 to 240 (CFHPRRESHWSRTRL) lie on the Cytoplasmic side of the membrane.

Interacts with IGFBP3. Interacts with CASP8. As to expression, widely expressed in normal tissues but suppressed in prostate and breast tumor.

It localises to the cell membrane. Functionally, cell death receptor specific for IGFBP3, may mediate caspase-8-dependent apoptosis upon ligand binding. The protein is Insulin-like growth factor-binding protein 3 receptor (TMEM219) of Homo sapiens (Human).